Consider the following 629-residue polypeptide: tRNA uridine 5-carboxymethylaminomethyl modification enzyme MnmG (629 aa).

Residue 13 to 18 (GGGHAG) coordinates FAD. 273 to 287 (GPRYCPSIEDKVVRF) is a binding site for NAD(+).

The protein belongs to the MnmG family. Homodimer. Heterotetramer of two MnmE and two MnmG subunits. FAD serves as cofactor.

The protein localises to the cytoplasm. Functionally, NAD-binding protein involved in the addition of a carboxymethylaminomethyl (cmnm) group at the wobble position (U34) of certain tRNAs, forming tRNA-cmnm(5)s(2)U34. The polypeptide is tRNA uridine 5-carboxymethylaminomethyl modification enzyme MnmG (Alkalilimnicola ehrlichii (strain ATCC BAA-1101 / DSM 17681 / MLHE-1)).